Here is a 411-residue protein sequence, read N- to C-terminus: Exodeoxyribonuclease 7 large subunit (411 aa).

The protein belongs to the XseA family. Heterooligomer composed of large and small subunits.

It is found in the cytoplasm. It catalyses the reaction Exonucleolytic cleavage in either 5'- to 3'- or 3'- to 5'-direction to yield nucleoside 5'-phosphates.. In terms of biological role, bidirectionally degrades single-stranded DNA into large acid-insoluble oligonucleotides, which are then degraded further into small acid-soluble oligonucleotides. The polypeptide is Exodeoxyribonuclease 7 large subunit (Mycobacterium sp. (strain JLS)).